The chain runs to 762 residues: Mitochondrial intermediate peptidase (762 aa).

The N-terminal 28 residues, 1–28, are a transit peptide targeting the mitochondrion; sequence MQVRTLLTLGKKKVIGNRQCILSLYRKY. Residue histidine 544 participates in Zn(2+) binding. Glutamate 545 is an active-site residue. Residues histidine 548 and histidine 551 each contribute to the Zn(2+) site.

It belongs to the peptidase M3 family. Requires Zn(2+) as cofactor.

It localises to the mitochondrion matrix. It catalyses the reaction Release of an N-terminal octapeptide as second stage of processing of some proteins imported into the mitochondrion.. Cleaves proteins, imported into the mitochondrion, to their mature size. While most mitochondrial precursor proteins are processed to the mature form in one step by mitochondrial processing peptidase (MPP), the sequential cleavage by MIP of an octapeptide after initial processing by MPP is a required step for a subgroup of nuclear-encoded precursor proteins destined for the matrix or the inner membrane. The sequence is that of Mitochondrial intermediate peptidase (oct1) from Schizosaccharomyces pombe (strain 972 / ATCC 24843) (Fission yeast).